We begin with the raw amino-acid sequence, 122 residues long: Iron-sulfur cluster assembly protein SufA (122 aa).

[2Fe-2S] cluster-binding residues include cysteine 50, cysteine 114, and cysteine 116. The [4Fe-4S] cluster site is built by cysteine 50, cysteine 114, and cysteine 116.

Belongs to the HesB/IscA family. As to quaternary structure, homodimer. Interacts with SufB and SufC.

Member of gene cluster sufABCDSE that mediates iron-sulfur cluster assembly under oxidative stress and iron limitation conditions. Binds [2Fe-2S] and [4Fe-4S] clusters by mobilizing sulfur atoms provided by the SufS-SufE cysteine desulfurase system and then transfers the assembled Fe-S clusters to target proteins including ferredoxin and aconitase. Seems to act as a Fe-S cluster carrier rather than a scaffold, this role being performed by SufB and SufC. This Escherichia coli (strain K12) protein is Iron-sulfur cluster assembly protein SufA (sufA).